Consider the following 357-residue polypeptide: Elongation factor Ts (357 aa).

The interval 82–85 (TDFV) is involved in Mg(2+) ion dislocation from EF-Tu.

This sequence belongs to the EF-Ts family.

Its subcellular location is the cytoplasm. Its function is as follows. Associates with the EF-Tu.GDP complex and induces the exchange of GDP to GTP. It remains bound to the aminoacyl-tRNA.EF-Tu.GTP complex up to the GTP hydrolysis stage on the ribosome. The polypeptide is Elongation factor Ts (Campylobacter jejuni (strain RM1221)).